The following is a 517-amino-acid chain: tRNA-2-methylthio-N(6)-dimethylallyladenosine synthase (517 aa).

Positions 29 to 146 (RTYQVRTYGC…LPTLLERARH (118 aa)) constitute an MTTase N-terminal domain. 6 residues coordinate [4Fe-4S] cluster: Cys38, Cys75, Cys109, Cys183, Cys187, and Cys190. Residues 169–405 (RESAYAAWVS…VELQESISLQ (237 aa)) form the Radical SAM core domain. The TRAM domain occupies 408 to 475 (QALVGQTVEL…PHHLIADAGV (68 aa)).

It belongs to the methylthiotransferase family. MiaB subfamily. In terms of assembly, monomer. [4Fe-4S] cluster serves as cofactor.

It localises to the cytoplasm. The catalysed reaction is N(6)-dimethylallyladenosine(37) in tRNA + (sulfur carrier)-SH + AH2 + 2 S-adenosyl-L-methionine = 2-methylsulfanyl-N(6)-dimethylallyladenosine(37) in tRNA + (sulfur carrier)-H + 5'-deoxyadenosine + L-methionine + A + S-adenosyl-L-homocysteine + 2 H(+). Its function is as follows. Catalyzes the methylthiolation of N6-(dimethylallyl)adenosine (i(6)A), leading to the formation of 2-methylthio-N6-(dimethylallyl)adenosine (ms(2)i(6)A) at position 37 in tRNAs that read codons beginning with uridine. The polypeptide is tRNA-2-methylthio-N(6)-dimethylallyladenosine synthase (Mycolicibacterium paratuberculosis (strain ATCC BAA-968 / K-10) (Mycobacterium paratuberculosis)).